Consider the following 266-residue polypeptide: Putative expansin-A30 (266 aa).

An N-terminal signal peptide occupies residues 1-24; sequence MAAASSTTATTAILAAVIISLAGA. Residues 55–170 enclose the Expansin-like EG45 domain; sequence GGACGYGNLY…RRVPCARAGG (116 aa). The Expansin-like CBD domain maps to 180–261; that stretch reads YWLLAYVMNV…SWCFGLTYQA (82 aa).

The protein belongs to the expansin family. Expansin A subfamily.

The protein localises to the secreted. It localises to the cell wall. It is found in the membrane. Its function is as follows. May cause loosening and extension of plant cell walls by disrupting non-covalent bonding between cellulose microfibrils and matrix glucans. No enzymatic activity has been found. May be required for rapid internodal elongation in deepwater rice during submergence. In Oryza sativa subsp. japonica (Rice), this protein is Putative expansin-A30 (EXPA30).